Here is a 244-residue protein sequence, read N- to C-terminus: RAD51-like protein 1 (244 aa).

In terms of assembly, interacts with brc-2 and rad-51.

The protein resides in the nucleus. Functionally, has a role in the homologous recombination repair (HRR) of genomic DNA during meiosis. Required for rad-51 recruitment onto ssDNA gaps generated at stalled replication fork barriers. In Caenorhabditis briggsae, this protein is RAD51-like protein 1.